Here is a 105-residue protein sequence, read N- to C-terminus: Small ribosomal subunit protein bS18 (105 aa).

Positions 1 to 34 (MMINKEQDLNQLETNQEQSVEQNQTDEKRKPKPN) are disordered. The segment covering 9–23 (LNQLETNQEQSVEQN) has biased composition (polar residues).

It belongs to the bacterial ribosomal protein bS18 family. As to quaternary structure, part of the 30S ribosomal subunit. Forms a tight heterodimer with protein bS6.

Its function is as follows. Binds as a heterodimer with protein bS6 to the central domain of the 16S rRNA, where it helps stabilize the platform of the 30S subunit. In Mycoplasma genitalium (strain ATCC 33530 / DSM 19775 / NCTC 10195 / G37) (Mycoplasmoides genitalium), this protein is Small ribosomal subunit protein bS18.